The primary structure comprises 1324 residues: Tetratricopeptide repeat protein 21 homolog (1324 aa).

16 TPR repeats span residues 58 to 91, 414 to 446, 582 to 615, 669 to 702, 737 to 770, 772 to 804, 806 to 837, 847 to 880, 894 to 927, 929 to 961, 963 to 995, 997 to 1029, 1033 to 1066, 1205 to 1238, 1240 to 1272, and 1274 to 1307; these read PALA…NDVA, SPLY…LVEM, SLYH…PRKE, DQLV…QSNF, PGSY…QSKD, QLAE…YKDK, MRLK…DPEP, IQFL…HSRI, ARIC…HETD, KANL…DPHN, EANS…NPQH, HALS…NPRC, SGYN…AAGW, EKCW…NCNC, KAFE…TKER, and PGFG…NPQY.

Belongs to the TTC21 family. As to quaternary structure, component of the IFT complex A (IFT-A) composed of at least che-11, daf-10, dyf-2, ift-139, ift-43 and ifta-1. In terms of tissue distribution, expressed in ciliated sensory neurons in the head and tail.

Its subcellular location is the cell projection. It localises to the cilium. It is found in the cytoplasm. The protein localises to the cytoskeleton. The protein resides in the cilium basal body. Its subcellular location is the dendrite. In terms of biological role, component of the IFT complex A (IFT-A), a complex required for retrograde ciliary transport. In particular, may act redundantly with the intraflagellar transport protein ift-43 to regulate the transport of specific ciliary cargo proteins such as che-3 which are related to motility. Functions in cilia biogenesis. This is Tetratricopeptide repeat protein 21 homolog from Caenorhabditis elegans.